A 107-amino-acid chain; its full sequence is Large ribosomal subunit protein eL21 (107 aa).

The protein belongs to the eukaryotic ribosomal protein eL21 family.

In Aeropyrum pernix (strain ATCC 700893 / DSM 11879 / JCM 9820 / NBRC 100138 / K1), this protein is Large ribosomal subunit protein eL21 (rpl21e).